The sequence spans 402 residues: UDP-glucose 6-dehydrogenase (402 aa).

NAD(+)-binding positions include 2-19 (KIAV…GVLL), V11, D29, K34, T83, T118, and E145. Substrate-binding positions include 141-145 (EFLRE), K204, N208, 249-253 (YNNPS), and G257. Position 259 (Y259) interacts with NAD(+). Residue C260 is the Nucleophile of the active site. Residue K263 coordinates NAD(+). K320 is a binding site for substrate. Residue R327 participates in NAD(+) binding.

The protein belongs to the UDP-glucose/GDP-mannose dehydrogenase family.

The enzyme catalyses UDP-alpha-D-glucose + 2 NAD(+) + H2O = UDP-alpha-D-glucuronate + 2 NADH + 3 H(+). It functions in the pathway nucleotide-sugar biosynthesis; UDP-alpha-D-glucuronate biosynthesis; UDP-alpha-D-glucuronate from UDP-alpha-D-glucose: step 1/1. Catalyzes the formation of UDP-glucuronic acid which is required for capsular hyaluronic acid synthesis. The sequence is that of UDP-glucose 6-dehydrogenase (hasB) from Streptococcus pyogenes serotype M1.